The sequence spans 416 residues: Sulfoquinovosyl glycerol-binding protein SmoF (416 aa).

The first 29 residues, 1-29 (MTLKTIRGKALMGAALCATMLTFSGQAFA), serve as a signal peptide directing secretion. Gln-40 is a binding site for 3-(6-sulfo-alpha-D-quinovosyl)glycerol. His-41 contacts 6-sulfo-D-quinovose. Residues Ser-71, Asp-95, Asp-141, Gly-194, Thr-248, Gly-303, Trp-304, and Arg-373 each contribute to the 3-(6-sulfo-alpha-D-quinovosyl)glycerol site. The 6-sulfo-D-quinovose site is built by Gly-303, Trp-304, and Arg-373.

This sequence belongs to the bacterial solute-binding protein 1 family. The complex is probably composed of two ATP-binding proteins (SmoE), two transmembrane proteins (SmoG and SmoH) and a solute-binding protein (SmoF).

The protein localises to the periplasm. Functionally, part of the ABC transporter complex SmoEFGH involved in sulfoquinovosyl glycerol (SQGro) uptake. Binds sulfoquinovosyl glycerol (SQGro). Can also bind sulfoquinovose (SQ), methyl alpha-sulfoquinovoside (SQMe) and a short-chain derivative of sulfoquinovosyl diacylglycerol (SQDG). Cannot bind D-glucose and D-glucuronic acid. In Agrobacterium fabrum (strain C58 / ATCC 33970) (Agrobacterium tumefaciens (strain C58)), this protein is Sulfoquinovosyl glycerol-binding protein SmoF.